The chain runs to 1151 residues: Zinc finger protein ZFPM2 (1151 aa).

Basic residues predominate over residues 1–13 (MSRRKQSKPRQIK). The disordered stretch occupies residues 1–102 (MSRRKQSKPR…ETDDWDGPGE (102 aa)). Acidic residues-rich tracts occupy residues 18–33 (DAIE…EETD) and 70–82 (EGIQ…DGDT). The CCHC FOG-type 1 zinc finger occupies 244 to 277 (IVNKDIFPCKSCGIWYRSERNLQAHLMYYCSGRQ). Zn(2+) is bound by residues Cys252, Cys255, His268, and Cys273. A C2H2-type 1 zinc finger spans residues 296–320 (SLCPFPQCTKSFSNARALEMHLNSH). Lys324 is covalently cross-linked (Glycyl lysine isopeptide (Lys-Gly) (interchain with G-Cter in SUMO1)). C2H2-type zinc fingers lie at residues 335–357 (LKCT…LFSH) and 363–385 (FRCN…QELH). Residues 389-487 (GKLPRESDME…RLASSPVQPN (99 aa)) are disordered. Polar residues-rich tracts occupy residues 401-410 (PSATEDSLQP) and 419-431 (ELPQ…QTKD). Lys444 participates in a covalent cross-link: Glycyl lysine isopeptide (Lys-Gly) (interchain with G-Cter in SUMO2). The span at 447-485 (LFLTNQRPEIQPTTNKQSFSYTKIKSEPSSPRLASSPVQ) shows a compositional bias: polar residues. Lys471 is covalently cross-linked (Glycyl lysine isopeptide (Lys-Gly) (interchain with G-Cter in SUMO1)). Position 532 is a phosphoserine (Ser532). The CCHC FOG-type 2 zinc-finger motif lies at 542-575 (PLMPKGATCFECNITFNNLDNYLVHKKHYCSSRW). Cys550, Cys553, His566, and Cys571 together coordinate Zn(2+). Ser581 is modified (phosphoserine). The tract at residues 636-683 (GPNGKGHDKDFSTQTKKLSTSSNNDDKINGKPVDVKNPSVPLVDGESD) is disordered. Residues 647-658 (STQTKKLSTSSN) are compositionally biased toward polar residues. The CCHC FOG-type 3 zinc finger occupies 681–714 (ESDPNKTTCEACNITFSRHETYMVHKQYYCATRH). The Zn(2+) site is built by Cys689, Cys692, His705, and Cys710. The Nuclear localization signal signature appears at 736–740 (RKRRK). The tract at residues 829 to 835 (PIDLSKK) is interaction with CTBP2. A CCHC FOG-type 4 zinc finger spans residues 848–881 (KRLLDYHECTVCKISFNKVENYLAHKQNFCPVTA). Residues Cys856, Cys859, His872, and Cys877 each contribute to the Zn(2+) site. Ser904 is subject to Phosphoserine. Residues Lys915 and Lys955 each participate in a glycyl lysine isopeptide (Lys-Gly) (interchain with G-Cter in SUMO1) cross-link. Phosphoserine is present on Ser1014. Positions 1051–1095 (DERPAANPQQENISQNPQHEDDHKSPSWISENPLAANENVSPGIP) are disordered. Residues 1057 to 1067 (NPQQENISQNP) show a composition bias toward polar residues. Residues 1113–1146 (QAPTSGKYCRLCDIQFNNLSNFITHKKFYCSSHA) form a CCHC FOG-type 5 zinc finger. Positions 1121, 1124, 1137, and 1142 each coordinate Zn(2+).

The protein belongs to the FOG (Friend of GATA) family. In terms of assembly, interacts with the N-terminal zinc-finger of GATA4, GATA5 and probably GATA6. Interacts with retinoid nuclear receptor RXRA when ligand bound. Interacts with corepressor CTBP2; this interaction is however not essential for corepressor activity. Able to bind GATA1 in vitro. Interacts with NR2F2 and NR2F6. Interacts with ATOH8; mediates indirect interaction with GATA4. In terms of processing, sumoylation reduces transcriptional repression activity. Widely expressed at low level.

Its subcellular location is the nucleus. Functionally, transcription regulator that plays a central role in heart morphogenesis and development of coronary vessels from epicardium, by regulating genes that are essential during cardiogenesis. Essential cofactor that acts via the formation of a heterodimer with transcription factors of the GATA family GATA4, GATA5 and GATA6. Such heterodimer can both activate or repress transcriptional activity, depending on the cell and promoter context. Also required in gonadal differentiation, possibly be regulating expression of SRY. Probably acts a corepressor of NR2F2. In Homo sapiens (Human), this protein is Zinc finger protein ZFPM2 (ZFPM2).